The following is a 763-amino-acid chain: Eukaryotic translation initiation factor 3 subunit B (763 aa).

Residues 1–136 (MKNFLPRTLK…LFVECGSMND (136 aa)) form a sufficient for interaction with HCR1 and TIF32 region. The interval 28-261 (RNTQLKRSKI…GVTAWGGPNF (234 aa)) is sufficient for interaction with PIC8. A Phosphoserine modification is found at serine 61. Tyrosine 67 carries the post-translational modification Phosphotyrosine. Positions 77-162 (QYIVVNGAPV…HRLFLYTMKD (86 aa)) constitute an RRM domain. 6 WD repeats span residues 228 to 266 (RENWSTNYVRFSPKGTYLFSYHQQGVTAWGGPNFDRLRR), 277 to 325 (VSPN…LMAT), 373 to 416 (LKPS…SACT), 484 to 524 (ELKD…IRFY), 544 to 589 (IPKT…EKNI), and 605 to 650 (PTYS…VKED). At serine 669 the chain carries Phosphoserine.

This sequence belongs to the eIF-3 subunit B family. The eukaryotic translation initiation factor 3 (eIF-3) core complex is composed of TIF32, PRT1, NIP1, TIF34 and TIF35. A subcomplex of TIF32, NIP1 and PRT1 mediates the interaction with eIF-1, TIF5/eIF-5 and HCR1. The factors eIF-1, eIF-2, eIF-3, TIF5/eIF-5 and methionyl-tRNAi form a multifactor complex (MFC) that may bind to the 40S ribosome.

The protein localises to the cytoplasm. In terms of biological role, RNA-binding component of the eukaryotic translation initiation factor 3 (eIF-3) complex, which is involved in protein synthesis of a specialized repertoire of mRNAs and, together with other initiation factors, stimulates binding of mRNA and methionyl-tRNAi to the 40S ribosome. The eIF-3 complex specifically targets and initiates translation of a subset of mRNAs involved in cell proliferation. The sequence is that of Eukaryotic translation initiation factor 3 subunit B from Saccharomyces cerevisiae (strain ATCC 204508 / S288c) (Baker's yeast).